Here is a 63-residue protein sequence, read N- to C-terminus: uncharacterized protein (63 aa).

Transmembrane regions (helical) follow at residues 3 to 23 (VFLI…VYYI) and 42 to 62 (ALVC…TKLL).

The protein localises to the cell membrane. This is an uncharacterized protein from Bacillus subtilis (strain 168).